The sequence spans 510 residues: 2,3-bisphosphoglycerate-independent phosphoglycerate mutase (510 aa).

Residues Asp-14 and Ser-64 each contribute to the Mn(2+) site. Ser-64 acts as the Phosphoserine intermediate in catalysis. Residues His-125, 155–156 (RD), Arg-187, Arg-193, 259–262 (RADR), and Lys-332 each bind substrate. Mn(2+)-binding residues include Asp-399, His-403, Asp-440, His-441, and His-459.

The protein belongs to the BPG-independent phosphoglycerate mutase family. In terms of assembly, monomer. Mn(2+) serves as cofactor.

It carries out the reaction (2R)-2-phosphoglycerate = (2R)-3-phosphoglycerate. Its pathway is carbohydrate degradation; glycolysis; pyruvate from D-glyceraldehyde 3-phosphate: step 3/5. Its function is as follows. Catalyzes the interconversion of 2-phosphoglycerate and 3-phosphoglycerate. This chain is 2,3-bisphosphoglycerate-independent phosphoglycerate mutase, found in Ectopseudomonas mendocina (strain ymp) (Pseudomonas mendocina).